The chain runs to 398 residues: uncharacterized protein (398 aa).

6 consecutive transmembrane segments (helical) span residues 37 to 57, 92 to 112, 122 to 142, 186 to 206, 228 to 248, and 268 to 288; these read LVIL…FVQF, IFNA…FIFG, LLTL…SYIP, LFYG…ILII, IGGI…VIGT, and FGVA…NIVL.

The protein localises to the cell membrane. This is an uncharacterized protein from Mycoplasma genitalium (strain ATCC 33530 / DSM 19775 / NCTC 10195 / G37) (Mycoplasmoides genitalium).